The primary structure comprises 265 residues: Mlc titration factor A (265 aa).

Zn(2+)-binding residues include His-111, His-148, His-152, and Glu-211.

This sequence belongs to the MtfA family. In terms of assembly, interacts with Mlc. The cofactor is Zn(2+).

Its subcellular location is the cytoplasm. Its function is as follows. Involved in the modulation of the activity of the glucose-phosphotransferase system (glucose-PTS). Interacts with the transcriptional repressor Mlc, preventing its interaction with DNA and leading to the modulation of expression of genes regulated by Mlc, including ptsG, which encodes the PTS system glucose-specific EIICB component. Functionally, shows zinc-dependent metallopeptidase activity. This is Mlc titration factor A from Salmonella gallinarum (strain 287/91 / NCTC 13346).